The chain runs to 378 residues: Forkhead box protein F1 (378 aa).

Residues 1–45 form a disordered region; the sequence is MSAPDKQQPPHGGGTGGGGGAGGQAMDPAAAGPTKAKKTNAGVRR. The span at 11–23 shows a compositional bias: gly residues; the sequence is HGGGTGGGGGAGG. The span at 24 to 42 shows a compositional bias: low complexity; that stretch reads QAMDPAAAGPTKAKKTNAG. Positions 47–138 form a DNA-binding region, fork-head; it reads EKPPYSYIAL…EFMFEEGSFR (92 aa).

Expressed primarily in lung in alveolar type II pneumocyte cells, and to a lesser extent in placenta, stomach, intestine and colon.

It localises to the nucleus. Functionally, probable transcription activator for a number of lung-specific genes. The sequence is that of Forkhead box protein F1 (Foxf1) from Mus musculus (Mouse).